Consider the following 157-residue polypeptide: Transcriptional repressor NrdR (157 aa).

Residues 3–34 (CPFCGFADTRVIDSRLGKEGNNIRRRRECSQC) fold into a zinc finger. Residues 49-139 (PLIIKKDARR…VYRQFKDINE (91 aa)) enclose the ATP-cone domain.

The protein belongs to the NrdR family. Zn(2+) serves as cofactor.

Its function is as follows. Negatively regulates transcription of bacterial ribonucleotide reductase nrd genes and operons by binding to NrdR-boxes. In Syntrophotalea carbinolica (strain DSM 2380 / NBRC 103641 / GraBd1) (Pelobacter carbinolicus), this protein is Transcriptional repressor NrdR.